Here is a 167-residue protein sequence, read N- to C-terminus: Iron-sulfur cluster assembly protein 1 (167 aa).

Residues 1–50 constitute a mitochondrion transit peptide; it reads MMLKQAAKKALGLTSRQSTPWSVGILRTYHENVIDHYDNPRNVGSFDKND.

Belongs to the NifU family. Component of the core Fe-S cluster (ISC) assembly machinery. Interacts with HSCB. [2Fe-2S] cluster is required as a cofactor. In terms of tissue distribution, expressed in roots, stems, leaves, flowers, pollen and siliques.

The protein resides in the mitochondrion matrix. It localises to the cytoplasm. Its subcellular location is the cytosol. Its pathway is cofactor biosynthesis; iron-sulfur cluster biosynthesis. Functionally, scaffold protein for the de novo synthesis of iron-sulfur (Fe-S) clusters within mitochondria, which is required for maturation of both mitochondrial and cytoplasmic [2Fe-2S] and [4Fe-4S] proteins. First, a [2Fe-2S] cluster is transiently assembled on the scaffold protein ISCU (ISU1, ISU2 or ISU3). In a second step, the cluster is released from ISCU, transferred to a glutaredoxin, followed by the formation of mitochondrial [2Fe-2S] proteins, the synthesis of [4Fe-4S] clusters and their target-specific insertion into the recipient apoproteins. Cluster assembly on ISCU depends on the function of the cysteine desulfurase complex NFS1-ISD11, which serves as the sulfur donor for cluster synthesis, the iron-binding protein frataxin as the putative iron donor, and the electron transfer chain comprised of ferredoxin reductase and ferredoxin, which receive their electrons from NADH. The sequence is that of Iron-sulfur cluster assembly protein 1 (ISU1) from Arabidopsis thaliana (Mouse-ear cress).